Reading from the N-terminus, the 144-residue chain is Large ribosomal subunit protein uL16 (144 aa).

Residues 1–17 (MLQPKKTKFRRQQKGRA) are compositionally biased toward basic residues. The segment at 1–22 (MLQPKKTKFRRQQKGRAKGNAQ) is disordered.

The protein belongs to the universal ribosomal protein uL16 family. As to quaternary structure, part of the 50S ribosomal subunit.

Binds 23S rRNA and is also seen to make contacts with the A and possibly P site tRNAs. The protein is Large ribosomal subunit protein uL16 of Bacteroides fragilis (strain ATCC 25285 / DSM 2151 / CCUG 4856 / JCM 11019 / LMG 10263 / NCTC 9343 / Onslow / VPI 2553 / EN-2).